The primary structure comprises 447 residues: MTAHEVNFDGLVGLTHHYAGLSFGNEASTRHRFQVSNPRLAVKQGLLKMKALADAGFPQAVIPPHERPFIPALRQLGFTGSDEQILDKVARQAPRWLSSVSSASPMWVANAATVCPSADALDGKVHLTVANLNNKFHRALEAPVTEALLRAIFRDESQFSVHSALPQVALLGDEGAANHNRLGGEYGSAGVQLFVYGREEENEIRPARYPARQSREASEAVARLNQVNPQQVIFAQQNPEVIDQGVFHNDVIAVSNRQVLFCHEAAFARQKVLINQLRTRVDGFMAIEVPAGEVSVSDAVATYLFNSQLLSRNDGLMLLVLPRECQDHVGVWRYLNKLVAEDNPISAMQVFDLRESMANGGGPACLRLRVVLTEEERRAVNPAVMMNDALFTALNAWADRYYRDRLTAADLADPLLLREGREALDVLTRLLDLGSVYPFQQTGAADG.

Substrate-binding positions include Ala-19–Ser-28, Asn-110, and His-137–Arg-138. Glu-174 is a catalytic residue. Arg-212 serves as a coordination point for substrate. His-248 is a catalytic residue. The substrate site is built by Asp-250 and Asn-359. Cys-365 acts as the Nucleophile in catalysis.

This sequence belongs to the succinylarginine dihydrolase family. As to quaternary structure, homodimer.

It catalyses the reaction N(2)-succinyl-L-arginine + 2 H2O + 2 H(+) = N(2)-succinyl-L-ornithine + 2 NH4(+) + CO2. It functions in the pathway amino-acid degradation; L-arginine degradation via AST pathway; L-glutamate and succinate from L-arginine: step 2/5. Functionally, catalyzes the hydrolysis of N(2)-succinylarginine into N(2)-succinylornithine, ammonia and CO(2). This chain is N-succinylarginine dihydrolase, found in Salmonella typhimurium (strain LT2 / SGSC1412 / ATCC 700720).